The primary structure comprises 751 residues: MMESPKYKKSTCSVTNLGGTCILPQKGATAPKAKDVSPELLVNKMDNLCQDWARTRNEYNKVHIEQAPTDSYFGVVHSHTPKKKYTSRDSDSEPEATSTRRSATAQRAANLKSSPVDQWSTTPPQPQPQPAAPTVKKTCASSPPAALSVKRTCTSPPPPPVLIDDDTGEDAFYDTNDPDIFYDIENGVSELETEGPKRPVYYQRNIRYPIDGSVPQESEQWYDPIDDEFLASSGDVVSLEPSPIAAFQPTPPKTVQFVPMPEEIIVPPPPPPKTVVDEGVQAMPYTVDQMIQTDFEESPLLANVNLRTIPIEEVNPNFSPVLMQDMVRDSFVFGTVAQRVMASQRVKQFFKELIEQDVSLAGRMCMDSGSPQLNLYNSLMGVKLLYRWRSSTTFYRAIVPEIDEPVQVMQDVLSSSEWAKFDSQAGIPPKMVYIHYKLLNDLVKTLICPNFQLTHAALVCVDCRPEAVGSDGLQDGRQRRCSNLVSEYHEMTLEDLFNTIKPADLNAKNIILSVLFQMLYAVATVQKQFGMGGLFANADSVHVRRIQPGGFWHYTVNGLRYSVPNYGYLVILTNFTDVVNYRPDFATTRYFGRRQAKVVPTRNWYKFVPFTTRYRPFVTVDPITQAKTTAYAPNPPTEGITINEFYKDSSDLRPSVPVDLNDMITFPVPEFHLTICRLFSFFSKFYDSNFIGNDPFVRNLVDRYSQPFEFPDVYWPEDGVSRVLACYTIEEIYPNWVDGDTDYVIESYNLD.

Residues 73–169 (FGVVHSHTPK…PVLIDDDTGE (97 aa)) form a disordered region. The span at 96-109 (ATSTRRSATAQRAA) shows a compositional bias: low complexity. The span at 111–120 (LKSSPVDQWS) shows a compositional bias: polar residues.

This is an uncharacterized protein from Invertebrate iridescent virus 3 (IIV-3).